A 397-amino-acid polypeptide reads, in one-letter code: P2X purinoceptor 3 (397 aa).

Residues 1–20 (MNCISDFFTYETTKSVVVKS) are Cytoplasmic-facing. Residues 21–43 (WTIGIINRAVQLLIISYFVGWVF) traverse the membrane as a helical segment. The Extracellular portion of the chain corresponds to 44–322 (LHEKAYQVRD…AGKFNIIPTI (279 aa)). Residues K63 and K65 each contribute to the ATP site. Cystine bridges form between C107/C153, C116/C137, and C122/C147. E111 contacts Mg(2+). An N-linked (GlcNAc...) asparagine glycan is attached at N139. Residue D158 coordinates Mg(2+). Position 158 (D158) interacts with Ca(2+). The N-linked (GlcNAc...) asparagine glycan is linked to N170. Residue T172 coordinates ATP. An N-linked (GlcNAc...) asparagine glycan is attached at N194. 2 disulfides stabilise this stretch: C203–C213 and C247–C256. S275, N279, and R281 together coordinate ATP. N-linked (GlcNAc...) asparagine glycosylation occurs at N290. K299 is a binding site for ATP. Residues 323 to 341 (ISSVAAFTSVGVGTVLCDI) traverse the membrane as a helical segment. At 342–397 (ILLNFLKGADHYKARKFEEVTETTLKGTASTNPVFASDQATVEKQSTDSGAYSIGH) the chain is on the cytoplasmic side.

The protein belongs to the P2X receptor family. In terms of assembly, homotrimer. Forms heterotrimer with P2RX2. Heterotrimeric P2RX2/3 has a ligand dose-response profile that is distinct from either homotrimeric P2RX2 or P2RX3. As to expression, selectively expressed in sensory ganglia.

The protein localises to the cell membrane. It carries out the reaction Ca(2+)(in) = Ca(2+)(out). The catalysed reaction is Na(+)(in) = Na(+)(out). Has high sensitivity to ATP. Fast activation by external ATP. Exhibits rapid desensitization. Sensitives to the ATP agonist:alpha/beta-methylene-ATP. Subject to allosteric inhibition by AF-219. Mg(2+) and Ca(2+) slow deactivation of P2RX3. In terms of biological role, extracellular ATP-activated non-selective cation channel. Plays particularly important role in sensory neurons where its activation is critical for gustatory, nociceptive responses, visceral reflexes and sensory hypersensitization. The protein is P2X purinoceptor 3 (P2rx3) of Rattus norvegicus (Rat).